A 161-amino-acid polypeptide reads, in one-letter code: DNA-binding protein inhibitor ID-4 (161 aa).

In terms of domain architecture, bHLH spans 52-104 (AAEAAADEPALCLQCDMNDCYSRLRRLVPTIPPNKKVSKVEILPHVIDYILDL). The tract at residues 116–161 (RQPPPPAPPHHPAGTCPAAPPRTPLTALNTDPAGAVNKQGDSILCR) is disordered. The span at 117 to 126 (QPPPPAPPHH) shows a compositional bias: pro residues.

Heterodimer with other HLH proteins.

It is found in the nucleus. Transcriptional regulator (lacking a basic DNA binding domain) which negatively regulates the basic helix-loop-helix (bHLH) transcription factors by forming heterodimers and inhibiting their DNA binding and transcriptional activity. Implicated in regulating a variety of cellular processes, including cellular growth, senescence, differentiation, apoptosis, angiogenesis, and neoplastic transformation. The sequence is that of DNA-binding protein inhibitor ID-4 (ID4) from Sus scrofa (Pig).